Here is a 107-residue protein sequence, read N- to C-terminus: Putative double-stranded DNA mimic protein CGSHiGG_01135 (107 aa).

It belongs to the putative dsDNA mimic protein family.

May act as a double-stranded DNA (dsDNA) mimic. Probably regulates the activity of a dsDNA-binding protein. This chain is Putative double-stranded DNA mimic protein CGSHiGG_01135, found in Haemophilus influenzae (strain PittGG).